We begin with the raw amino-acid sequence, 809 residues long: Penicillin-binding protein 1A (809 aa).

Over 1-34 the chain is Cytoplasmic; the sequence is MSDNTKTNSRNKSVKRTKKVKKKKKFGFFKKLFT. The chain crosses the membrane as a helical; Signal-anchor for type II membrane protein span at residues 35–55; it reads ILFCLFILLSVAASGVIFAIV. Over 56 to 809 the chain is Extracellular; it reads KTSPNLDING…PNNNTTNTNK (754 aa). A transglycosylase region spans residues 74–251; the sequence is SQLYDDNNNP…PSAYYPFSQN (178 aa). The active-site Proton donor; for transglycosylase activity is E113. Residues 381 to 664 are transpeptidase; sequence AAATLFDYHT…VAEIWGEIMK (284 aa). S422 functions as the Acyl-ester intermediate; for transpeptidase activity in the catalytic mechanism. The disordered stretch occupies residues 694-809; that stretch reads SPSNLSGDDS…PNNNTTNTNK (116 aa).

In the N-terminal section; belongs to the glycosyltransferase 51 family. This sequence in the C-terminal section; belongs to the transpeptidase family.

The protein localises to the cell membrane. The catalysed reaction is [GlcNAc-(1-&gt;4)-Mur2Ac(oyl-L-Ala-gamma-D-Glu-L-Lys-D-Ala-D-Ala)](n)-di-trans,octa-cis-undecaprenyl diphosphate + beta-D-GlcNAc-(1-&gt;4)-Mur2Ac(oyl-L-Ala-gamma-D-Glu-L-Lys-D-Ala-D-Ala)-di-trans,octa-cis-undecaprenyl diphosphate = [GlcNAc-(1-&gt;4)-Mur2Ac(oyl-L-Ala-gamma-D-Glu-L-Lys-D-Ala-D-Ala)](n+1)-di-trans,octa-cis-undecaprenyl diphosphate + di-trans,octa-cis-undecaprenyl diphosphate + H(+). The enzyme catalyses Preferential cleavage: (Ac)2-L-Lys-D-Ala-|-D-Ala. Also transpeptidation of peptidyl-alanyl moieties that are N-acyl substituents of D-alanine.. Its pathway is cell wall biogenesis; peptidoglycan biosynthesis. Its function is as follows. Cell wall formation. Synthesis of cross-linked peptidoglycan from the lipid intermediates. The enzyme has a penicillin-insensitive transglycosylase N-terminal domain (formation of linear glycan strands) and a penicillin-sensitive transpeptidase C-terminal domain (cross-linking of the peptide subunits). The sequence is that of Penicillin-binding protein 1A (pbpA) from Clostridium acetobutylicum (strain ATCC 824 / DSM 792 / JCM 1419 / IAM 19013 / LMG 5710 / NBRC 13948 / NRRL B-527 / VKM B-1787 / 2291 / W).